The sequence spans 276 residues: Formamidopyrimidine-DNA glycosylase (276 aa).

Proline 2 (schiff-base intermediate with DNA) is an active-site residue. Glutamate 3 serves as the catalytic Proton donor. Lysine 58 functions as the Proton donor; for beta-elimination activity in the catalytic mechanism. Positions 92, 111, and 154 each coordinate DNA. Residues glutamine 239–valine 273 form an FPG-type zinc finger. Residue arginine 263 is the Proton donor; for delta-elimination activity of the active site.

The protein belongs to the FPG family. Monomer. Requires Zn(2+) as cofactor.

It carries out the reaction Hydrolysis of DNA containing ring-opened 7-methylguanine residues, releasing 2,6-diamino-4-hydroxy-5-(N-methyl)formamidopyrimidine.. The catalysed reaction is 2'-deoxyribonucleotide-(2'-deoxyribose 5'-phosphate)-2'-deoxyribonucleotide-DNA = a 3'-end 2'-deoxyribonucleotide-(2,3-dehydro-2,3-deoxyribose 5'-phosphate)-DNA + a 5'-end 5'-phospho-2'-deoxyribonucleoside-DNA + H(+). In terms of biological role, involved in base excision repair of DNA damaged by oxidation or by mutagenic agents. Acts as a DNA glycosylase that recognizes and removes damaged bases. Has a preference for oxidized purines, such as 7,8-dihydro-8-oxoguanine (8-oxoG). Has AP (apurinic/apyrimidinic) lyase activity and introduces nicks in the DNA strand. Cleaves the DNA backbone by beta-delta elimination to generate a single-strand break at the site of the removed base with both 3'- and 5'-phosphates. The chain is Formamidopyrimidine-DNA glycosylase from Lactobacillus acidophilus (strain ATCC 700396 / NCK56 / N2 / NCFM).